The following is a 66-amino-acid chain: Large ribosomal subunit protein bL31 (66 aa).

The Zn(2+) site is built by C16, C18, C36, and C39.

It belongs to the bacterial ribosomal protein bL31 family. Type A subfamily. As to quaternary structure, part of the 50S ribosomal subunit. Zn(2+) serves as cofactor.

In terms of biological role, binds the 23S rRNA. The polypeptide is Large ribosomal subunit protein bL31 (Trichlorobacter lovleyi (strain ATCC BAA-1151 / DSM 17278 / SZ) (Geobacter lovleyi)).